The primary structure comprises 151 residues: Small ribosomal subunit protein uS15 (151 aa).

This sequence belongs to the universal ribosomal protein uS15 family. Component of the small ribosomal subunit.

It is found in the cytoplasm. Its function is as follows. Component of the small ribosomal subunit. The ribosome is a large ribonucleoprotein complex responsible for the synthesis of proteins in the cell. The chain is Small ribosomal subunit protein uS15 (rps13) from Xenopus laevis (African clawed frog).